The primary structure comprises 398 residues: MIAASLRRMITHPAAGGVLLFAAALAAIVMANTDARALYNAIIYFPAQSASATPSHLSLLVLVNDGLMAVFFLAVGLEVKYELLQGALNSRVRAAFPAIAALGGMVAPAVIYSLMTAGTPALRAGWAIPAATDIAFAVGVLALLGTRVPVSLKVFMLALAIIDDLGAIVIIALFYNTALEPLALAAAGAVIGIMALMNRANVRFLSLYLLLGAVLWGCILLSGIHATLAGVVVGGLIPLTLPSTEVSPARALEHWLQPWVVYLILPLFAFANAGISLQGVAPGHLISFLPLGIAAGLVVGKPLGIVLFTAVAVKLRLARLPAGIAFRHIAAAAMLCGIGFTMSIFIANLAFGHDDPETIVLAKVGILSGSVIAALLGYLLLRAILPQPQGSGSVPVGG.

Transmembrane regions (helical) follow at residues 9-29, 57-77, 95-115, 124-144, 154-174, 177-197, 204-224, 226-246, 255-275, 288-308, 329-349, and 359-379; these read MITHPAAGGVLLFAAALAAIV, LSLLVLVNDGLMAVFFLAVGL, AFPAIAALGGMVAPAVIYSLM, AGWAIPAATDIAFAVGVLALL, VFMLALAIIDDLGAIVIIALF, TALEPLALAAAGAVIGIMALM, FLSLYLLLGAVLWGCILLSGI, ATLAGVVVGGLIPLTLPSTEV, WLQPWVVYLILPLFAFANAGI, FLPLGIAAGLVVGKPLGIVLF, IAAAAMLCGIGFTMSIFIANL, and IVLAKVGILSGSVIAALLGYL.

This sequence belongs to the NhaA Na(+)/H(+) (TC 2.A.33) antiporter family.

The protein resides in the cell inner membrane. It carries out the reaction Na(+)(in) + 2 H(+)(out) = Na(+)(out) + 2 H(+)(in). Functionally, na(+)/H(+) antiporter that extrudes sodium in exchange for external protons. This is Na(+)/H(+) antiporter NhaA from Sodalis glossinidius (strain morsitans).